The chain runs to 239 residues: Ribosomal RNA small subunit methyltransferase G (239 aa).

S-adenosyl-L-methionine is bound by residues Gly-95, Leu-100, Glu-118–Thr-120, Ala-146–Glu-147, and Arg-164.

Belongs to the methyltransferase superfamily. RNA methyltransferase RsmG family.

It is found in the cytoplasm. The catalysed reaction is guanosine(527) in 16S rRNA + S-adenosyl-L-methionine = N(7)-methylguanosine(527) in 16S rRNA + S-adenosyl-L-homocysteine. Functionally, specifically methylates the N7 position of guanine in position 527 of 16S rRNA. This chain is Ribosomal RNA small subunit methyltransferase G, found in Sorangium cellulosum (strain So ce56) (Polyangium cellulosum (strain So ce56)).